The chain runs to 250 residues: Ribosomal RNA small subunit methyltransferase J (250 aa).

Residues Arg96–Asp97 and Asp168 contribute to the S-adenosyl-L-methionine site.

The protein belongs to the methyltransferase superfamily. RsmJ family.

The protein localises to the cytoplasm. It catalyses the reaction guanosine(1516) in 16S rRNA + S-adenosyl-L-methionine = N(2)-methylguanosine(1516) in 16S rRNA + S-adenosyl-L-homocysteine + H(+). In terms of biological role, specifically methylates the guanosine in position 1516 of 16S rRNA. The polypeptide is Ribosomal RNA small subunit methyltransferase J (Neisseria meningitidis serogroup C / serotype 2a (strain ATCC 700532 / DSM 15464 / FAM18)).